The chain runs to 179 residues: UPF0134 protein MPN_145 (179 aa).

This sequence belongs to the UPF0134 family.

This chain is UPF0134 protein MPN_145, found in Mycoplasma pneumoniae (strain ATCC 29342 / M129 / Subtype 1) (Mycoplasmoides pneumoniae).